The primary structure comprises 179 residues: Inner membrane-spanning protein YciB (179 aa).

5 helical membrane-spanning segments follow: residues 22 to 42, 50 to 70, 76 to 96, 121 to 141, and 149 to 169; these read IYAATSALIVATAIVLIYSWV, MALITFVLVAVFGGLTLFFHN, WKVTVIYALFAGALLMSQWVM, LAWALFFIVCGLANIYIAFWL, and FKVFGLTALTLIFTLLSGVYI.

It belongs to the YciB family.

It localises to the cell inner membrane. In terms of biological role, plays a role in cell envelope biogenesis, maintenance of cell envelope integrity and membrane homeostasis. In Salmonella arizonae (strain ATCC BAA-731 / CDC346-86 / RSK2980), this protein is Inner membrane-spanning protein YciB.